The sequence spans 212 residues: Ropporin-1 (212 aa).

Residues 12–43 (PELPELLKQFTKAAIRSQPQDLIQWAAEYFGA) form the RIIa domain. The residue at position 56 (serine 56) is a Phosphoserine. The segment at 209 to 212 (VRLE) is interaction with RHPN1.

It belongs to the ropporin family. As to quaternary structure, homodimer. Interacts with AKAP3. May interact with SPA17. Interacts with RHPN1. Interacts with FSCB; the interaction increases upon spermatozoa capacitation conditions. Interacts with CFAP61. Sumoylated, sumoylation decreases upon spermatozoa capacitation conditions.

The protein resides in the cell projection. It is found in the cilium. Its subcellular location is the flagellum. Important for male fertility. With ROPN1L, involved in fibrous sheath integrity and sperm motility, plays a role in PKA-dependent signaling processes required for spermatozoa capacitation. This chain is Ropporin-1 (ROPN1), found in Bos taurus (Bovine).